Reading from the N-terminus, the 293-residue chain is 4-diphosphocytidyl-2-C-methyl-D-erythritol kinase (293 aa).

Lys16 is a catalytic residue. 99 to 109 serves as a coordination point for ATP; sequence PMGAGLGGGSS. Residue Asp141 is part of the active site.

This sequence belongs to the GHMP kinase family. IspE subfamily.

It carries out the reaction 4-CDP-2-C-methyl-D-erythritol + ATP = 4-CDP-2-C-methyl-D-erythritol 2-phosphate + ADP + H(+). It participates in isoprenoid biosynthesis; isopentenyl diphosphate biosynthesis via DXP pathway; isopentenyl diphosphate from 1-deoxy-D-xylulose 5-phosphate: step 3/6. Functionally, catalyzes the phosphorylation of the position 2 hydroxy group of 4-diphosphocytidyl-2C-methyl-D-erythritol. The chain is 4-diphosphocytidyl-2-C-methyl-D-erythritol kinase from Burkholderia lata (strain ATCC 17760 / DSM 23089 / LMG 22485 / NCIMB 9086 / R18194 / 383).